A 374-amino-acid polypeptide reads, in one-letter code: Protein A6 homolog (374 aa).

This sequence belongs to the chordopoxvirinae A6 family.

It is found in the virion. Functionally, plays an essential role in immature virion (IV) to mature virion (MV) transition. This is Protein A6 homolog from Vertebrata (FPV).